Reading from the N-terminus, the 483-residue chain is Isocitrate dehydrogenase [NADP] (483 aa).

T74 lines the NADP(+) pocket. Residues S83, N85, R89, R99, and R121 each contribute to the D-threo-isocitrate site. Residue D232 participates in Mg(2+) binding. Residues 264 to 270 and N277 contribute to the NADP(+) site; that span reads HGSAPDI.

Belongs to the isocitrate and isopropylmalate dehydrogenases family. As to quaternary structure, homodimer. Requires Mg(2+) as cofactor. Mn(2+) is required as a cofactor.

It carries out the reaction D-threo-isocitrate + NADP(+) = 2-oxoglutarate + CO2 + NADPH. Catalyzes the oxidative decarboxylation of isocitrate to 2-oxoglutarate and carbon dioxide with the concomitant reduction of NADP(+). The polypeptide is Isocitrate dehydrogenase [NADP] (icd) (Rickettsia conorii (strain ATCC VR-613 / Malish 7)).